The sequence spans 191 residues: Molybdenum cofactor guanylyltransferase (191 aa).

Residues 11–13, K23, D66, and D97 each bind GTP; that span reads LCG. D97 contacts Mg(2+).

Belongs to the MobA family. As to quaternary structure, monomer. Mg(2+) serves as cofactor.

Its subcellular location is the cytoplasm. It carries out the reaction Mo-molybdopterin + GTP + H(+) = Mo-molybdopterin guanine dinucleotide + diphosphate. Transfers a GMP moiety from GTP to Mo-molybdopterin (Mo-MPT) cofactor (Moco or molybdenum cofactor) to form Mo-molybdopterin guanine dinucleotide (Mo-MGD) cofactor. The chain is Molybdenum cofactor guanylyltransferase from Campylobacter jejuni subsp. jejuni serotype O:2 (strain ATCC 700819 / NCTC 11168).